Consider the following 217-residue polypeptide: Ras-related protein RABA2a (217 aa).

19-26 (GDSGVGKS) is a binding site for GTP. The Effector region signature appears at 41 to 49 (SKSTIGVEF). GTP contacts are provided by residues 67-71 (DTAGQ), 125-128 (NKTD), and 155-156 (SA). A lipid anchor (S-palmitoyl cysteine) is attached at C213. C214 bears the Cysteine methyl ester mark. Residue C214 is the site of S-geranylgeranyl cysteine attachment. A propeptide spans 215–217 (SSS) (removed in mature form).

Belongs to the small GTPase superfamily. Rab family. In terms of tissue distribution, expressed in root tips.

The protein resides in the endosome membrane. The protein localises to the golgi apparatus. Its subcellular location is the trans-Golgi network membrane. Its function is as follows. Intracellular vesicle trafficking and protein transport. The chain is Ras-related protein RABA2a (RABA2A) from Arabidopsis thaliana (Mouse-ear cress).